A 158-amino-acid chain; its full sequence is uncharacterized protein (158 aa).

The tract at residues 1 to 26 is disordered; it reads MRASRSPPSPRRCHHHHEATGAASGA.

This is an uncharacterized protein from Homo sapiens (Human).